The following is a 20-amino-acid chain: Peptide encoded by miPEP171b (20 aa).

As to expression, lateral root initiations.

Functionally, regulatory peptide encoded by the primary transcript (pri-miR171b) of the microRNA miR171b that enhances the accumulation of its corresponding mature miRNA. Acts probably as a transcriptional activator of its corresponding pri-miRNA. Has no effect on the accumulation of other miRNAs. Addition of synthetic miPEP171b increases the abundance of miR171b, with consequent reduction of lateral root formation. In Medicago truncatula (Barrel medic), this protein is Peptide encoded by miPEP171b.